The following is a 641-amino-acid chain: MEMKWFLSKIQDDFRGGKINLEKTQRLLEKLDIRCSYIHVKRIFKDNDRLKQGRITIEEFRAIYRILTHREEIVEIFNAYSENRKILLENNLVQFLTQEQYTTEMSKTIAFEIIQKYEPIEEVRKARQMSLEGFTRYMDSRECQLFKNECRKVYQDMTHPLNDYFISSSHNTYLVSDQLVGPSDLWGYVSALVKGCRCLEIDCWDGAQNEPVVYHGYTLTSKLLFKTVIQAIHKYAFMTSDYPVVLSLENHCSPAQQEIMADNLQTTFGESLLSDMLADFPDTLPSPEALKFKVLVKNKKIGTLKETHERKGSDKRGKVEEWEEEVADLEEEEEEEEKFKESEIFESVLGENQDKETGVKKLSGVTLFKKKKTRKLKIALALSDLVIYTKAEKFKSFQHSRLYQQFNENNSIGETQARKLSKLRAHEFIFHTRKFITRIYPKATRADSSNFNPQEFWNIGCQMVALNFQTPGLPMDLQNGKFLDNGGSGYILKPHFLRESESYFNPSDIKDSMPITLTIRLISGIQLPLTHSSSNKGDTLVIIEVFGVPNDQMKQQTRVIKKNAFSPRWNETFTFIIHVPELALIRFVVESQGLIAGNEFLGQYTLPLLCMNKGYRRVPLFSRMGESLEPASLFVYVWYVR.

The 36-residue stretch at 35-70 folds into the EF-hand domain; that stretch reads CSYIHVKRIFKDNDRLKQGRITIEEFRAIYRILTHR. The PI-PLC X-box domain occupies 155–299; that stretch reads QDMTHPLNDY…LKFKVLVKNK (145 aa). Catalysis depends on residues His-170 and His-215. Residues 382 to 498 enclose the PI-PLC Y-box domain; sequence LSDLVIYTKA…GYILKPHFLR (117 aa). In terms of domain architecture, C2 spans 498–622; the sequence is RESESYFNPS…KGYRRVPLFS (125 aa).

In terms of assembly, interacts via its C2 domain with PtdIns(3)P and, to a lesser extent, PtdIns(5)P in vitro. It depends on Ca(2+) as a cofactor.

Its subcellular location is the nucleus. It localises to the cytoplasm. The protein resides in the perinuclear region. It catalyses the reaction a 1,2-diacyl-sn-glycero-3-phospho-(1D-myo-inositol-4,5-bisphosphate) + H2O = 1D-myo-inositol 1,4,5-trisphosphate + a 1,2-diacyl-sn-glycerol + H(+). In terms of biological role, the production of the second messenger molecules diacylglycerol (DAG) and inositol 1,4,5-trisphosphate (IP3) is mediated by activated phosphatidylinositol-specific phospholipase C enzymes. In vitro, hydrolyzes PtdIns(4,5)P2 in a Ca(2+)-dependent manner. Triggers intracellular Ca(2+) oscillations in oocytes solely during M phase and is involved in inducing oocyte activation and initiating embryonic development up to the blastocyst stage. Is therefore a strong candidate for the egg-activating soluble sperm factor that is transferred from the sperm into the egg cytoplasm following gamete membrane fusion. May exert an inhibitory effect on phospholipase-C-coupled processes that depend on calcium ions and protein kinase C, including CFTR trafficking and function. The protein is 1-phosphatidylinositol 4,5-bisphosphate phosphodiesterase zeta-1 of Macaca fascicularis (Crab-eating macaque).